Here is a 118-residue protein sequence, read N- to C-terminus: Vesicle-associated membrane protein 1 (118 aa).

Residues 1-15 (MSAPAQPPTEGAEGA) show a composition bias toward low complexity. The disordered stretch occupies residues 1-36 (MSAPAQPPTEGAEGAAPGGGPPGPPPNMTSNRRLQQ). At 1 to 96 (MSAPAQPPTE…KRKYWWKNCK (96 aa)) the chain is on the cytoplasmic side. The v-SNARE coiled-coil homology domain occupies 33–93 (RLQQTQAQVE…AKLKRKYWWK (61 aa)). Serine 63 is subject to Phosphoserine. The helical; Anchor for type IV membrane protein transmembrane segment at 97 to 116 (MMIMLGAICAIIVVVIVIYF) threads the bilayer. Over 117 to 118 (FA) the chain is Vesicular.

It belongs to the synaptobrevin family. As to quaternary structure, interacts with VAPA and VAPB.

The protein resides in the cytoplasmic vesicle. It localises to the secretory vesicle. It is found in the synaptic vesicle membrane. Its subcellular location is the synapse. The protein localises to the synaptosome. The protein resides in the cytoplasmic vesicle membrane. Involved in the targeting and/or fusion of transport vesicles to their target membrane. The sequence is that of Vesicle-associated membrane protein 1 (VAMP1) from Bos taurus (Bovine).